Here is a 147-residue protein sequence, read N- to C-terminus: Hemoglobin subunit epsilon-2 (147 aa).

The Globin domain maps to 3-147 (HFTTEENVAV…VANALTHKYH (145 aa)). The heme b site is built by tyrosine 64 and histidine 93.

The protein belongs to the globin family. As to expression, red blood cells.

Its function is as follows. Hemoglobin epsilon chain is a beta-type chain found in early embryos. The protein is Hemoglobin subunit epsilon-2 (HBE2) of Bos taurus (Bovine).